Reading from the N-terminus, the 417-residue chain is WD repeat and FYVE domain-containing protein 2 (417 aa).

WD repeat units lie at residues 29 to 68, 119 to 157, 202 to 241, and 245 to 284; these read GHVA…QFWP, CHAG…NKVG, AHTN…GEAY, and GHNG…VETP. The segment at 286-357 adopts an FYVE-type zinc-finger fold; it reads WKTSDCCQKC…ICNDCAGRMK (72 aa). Positions 292, 295, 319, 322, 327, 330, 349, and 352 each coordinate Zn(2+). A WD 5 repeat occupies 373–412; that stretch reads EIRTGITAMHLQETLGLLVTSGQNRVVMIWDVRSVCSAPS.

In terms of biological role, plays a role in coelomocyte endocytosis. The sequence is that of WD repeat and FYVE domain-containing protein 2 from Caenorhabditis briggsae.